The sequence spans 295 residues: Protoheme IX farnesyltransferase (295 aa).

The next 9 membrane-spanning stretches (helical) occupy residues 27 to 47, 48 to 68, 94 to 114, 117 to 137, 144 to 164, 171 to 191, 216 to 236, 241 to 261, and 272 to 292; these read LVVFTAIAGMVAAPGSIHPFL, ALISLMCIALGSGSAGAINMW, SALEFGITIGILSVFIMAIAV, ISAALLAVSILFYVFVYTIWL, NIVIGGAAGAFPPMIGWAVVT, SFILFLIIFMWTPPHFWALSL, KHILIYSILLVLTSLLPALFL, FYLSMAIIEGCVFIWFAISVI, and MFSYSISYLFSLFASIIFCSI.

Belongs to the UbiA prenyltransferase family. Protoheme IX farnesyltransferase subfamily.

It localises to the cell membrane. The catalysed reaction is heme b + (2E,6E)-farnesyl diphosphate + H2O = Fe(II)-heme o + diphosphate. It functions in the pathway porphyrin-containing compound metabolism; heme O biosynthesis; heme O from protoheme: step 1/1. Converts heme B (protoheme IX) to heme O by substitution of the vinyl group on carbon 2 of heme B porphyrin ring with a hydroxyethyl farnesyl side group. In Wolbachia pipientis subsp. Culex pipiens (strain wPip), this protein is Protoheme IX farnesyltransferase.